We begin with the raw amino-acid sequence, 499 residues long: NAD(P)H-quinone oxidoreductase chain 4, chloroplastic (499 aa).

14 helical membrane passes run 4-24 (FPWL…IFFL), 35-55 (YTIY…CYNF), 84-104 (GLSI…TLAA), 111-129 (SRLF…IGSF), 134-154 (LLLF…LLSV), 167-187 (FILY…GIGL), 208-228 (ALEI…LPII), 242-262 (HYST…YGLI), 272-292 (AHSI…IYAA), 305-325 (IAYS…SITD), 330-350 (GAVL…FLAG), 386-406 (LALP…GIIT), 416-436 (IVIT…SLSM), and 462-482 (LFVL…PDFV).

It belongs to the complex I subunit 4 family.

The protein localises to the plastid. The protein resides in the chloroplast thylakoid membrane. The enzyme catalyses a plastoquinone + NADH + (n+1) H(+)(in) = a plastoquinol + NAD(+) + n H(+)(out). It carries out the reaction a plastoquinone + NADPH + (n+1) H(+)(in) = a plastoquinol + NADP(+) + n H(+)(out). This chain is NAD(P)H-quinone oxidoreductase chain 4, chloroplastic, found in Citrus sinensis (Sweet orange).